The following is a 342-amino-acid chain: tRNA N6-adenosine threonylcarbamoyltransferase (342 aa).

Fe cation-binding residues include His-115 and His-119. Substrate-binding positions include 138–142 (LVSGG), Asp-171, Gly-184, and Asn-276. Position 304 (Asp-304) interacts with Fe cation.

Belongs to the KAE1 / TsaD family. Fe(2+) serves as cofactor.

It is found in the cytoplasm. The enzyme catalyses L-threonylcarbamoyladenylate + adenosine(37) in tRNA = N(6)-L-threonylcarbamoyladenosine(37) in tRNA + AMP + H(+). Its function is as follows. Required for the formation of a threonylcarbamoyl group on adenosine at position 37 (t(6)A37) in tRNAs that read codons beginning with adenine. Is involved in the transfer of the threonylcarbamoyl moiety of threonylcarbamoyl-AMP (TC-AMP) to the N6 group of A37, together with TsaE and TsaB. TsaD likely plays a direct catalytic role in this reaction. This chain is tRNA N6-adenosine threonylcarbamoyltransferase, found in Dichelobacter nodosus (strain VCS1703A).